The sequence spans 342 residues: Putative glycosyltransferases (342 aa).

The next 2 membrane-spanning stretches (helical) occupy residues 227-247 and 262-282; these read IFYL…YLII and VIVS…LVGI.

Belongs to the glycosyltransferase 2 family.

Its subcellular location is the cell membrane. In terms of biological role, may play only a redundant role in maintaining cell wall viability and bacterial virulence. This chain is Putative glycosyltransferases (pimF), found in Mycobacterium tuberculosis (strain CDC 1551 / Oshkosh).